Reading from the N-terminus, the 346-residue chain is Glycosyltransferase 1 domain-containing protein 1 (346 aa).

A signal peptide spans 1-16 (MRLLFLAVLRPHTGNA).

Belongs to the glycosyltransferase group 1 family. Glycosyltransferase 4 subfamily.

The protein resides in the secreted. This is Glycosyltransferase 1 domain-containing protein 1 (GLT1D1) from Pongo abelii (Sumatran orangutan).